Here is a 440-residue protein sequence, read N- to C-terminus: MKLWGGRFKEEESKLMEDFNSSLSFDKKLYYEDIRGSIAHVKMLANQNIIKEEEKEKILLGLEEILKEIDEGILKIEGDYEDIHSFVEINLINKIGNVGKKLHTGRSRNDQVALDMKLYAKKSTEEVIECLKELMDSLIKVGNENNYIMPGYTHLQRAQVVTFRYHLLAYFEMFKRDEKRLKNALEILNESPLGSGALAGSTYSIDREYTAKLLGFRKPVDNFLDGVSDRDYIIELISKFSIIMMHLSRLSEELILWSSSEFRFIQIGDAYSTGSSIMPQKKNPDGAELIRGKTGRVYGDLIGILTVMKSLPLAYNKDMQEDKEPFFDAKDTVISCLKVMEGIISTLKVNKENLMKSVKKGFLNATEAADYLVNKGMAFRDAHKVIGEIVIYCEDKNSAIEDLSLEELKQFSDLFCEDIYGFIDYKSSINKGIKKEMGYS.

The protein belongs to the lyase 1 family. Argininosuccinate lyase subfamily.

Its subcellular location is the cytoplasm. It catalyses the reaction 2-(N(omega)-L-arginino)succinate = fumarate + L-arginine. It participates in amino-acid biosynthesis; L-arginine biosynthesis; L-arginine from L-ornithine and carbamoyl phosphate: step 3/3. This chain is Argininosuccinate lyase, found in Clostridium botulinum (strain Okra / Type B1).